A 115-amino-acid chain; its full sequence is Photosystem II reaction center Psb28 protein (115 aa).

This sequence belongs to the Psb28 family. As to quaternary structure, part of the photosystem II complex.

It is found in the plastid. The protein resides in the chloroplast thylakoid membrane. This Trieres chinensis (Marine centric diatom) protein is Photosystem II reaction center Psb28 protein.